The sequence spans 816 residues: Metabotropic glutamate receptor-like protein E (816 aa).

The signal sequence occupies residues 1-27 (MKIKIGNILKNVVILVIFSLFISKINS). Residues 28 to 436 (EVVKPNPAKP…QVVVFDRTLN (409 aa)) are Extracellular-facing. N-linked (GlcNAc...) asparagine glycosylation is found at Asn-68, Asn-311, and Asn-388. Residues 437-457 (IVLGVITGVCVLIVIGIGSVI) form a helical membrane-spanning segment. At 458-469 (ALQWRKFRYSSP) the chain is on the cytoplasmic side. A helical transmembrane segment spans residues 470 to 490 (LFCMFIIIGALMGLASVFTLL). Residues 491-496 (PTPTTP) are Extracellular-facing. A helical transmembrane segment spans residues 497 to 517 (LCSGFPWLLGLGYVIVFGTLF). Over 518–541 (TKTWRTWRLFSNARKFKIIRITNK) the chain is Cytoplasmic. Residues 542–562 (FIITLVGGFVLLESIFMIIWT) form a helical membrane-spanning segment. The Extracellular portion of the chain corresponds to 563 to 590 (AVDRPIPLAEPIFKAGEAQLQCTSDSEA). Residues 591–611 (WWYVFVFYKVFYILFGVFLAF) form a helical membrane-spanning segment. The Cytoplasmic segment spans residues 612 to 625 (KTRNVVDSLNESKP). The helical transmembrane segment at 626 to 646 (ITLALYNLTFVMVVAIALGFI) threads the bilayer. At 647 to 653 (LRDNPIA) the chain is on the extracellular side. The chain crosses the membrane as a helical span at residues 654-674 (IIVIQTIAILLGFTVTVSVLF). Over 675-816 (LPKVWMILSG…KKKKKKNNNK (142 aa)) the chain is Cytoplasmic. Residues 697–718 (DSMGRSNGNTTEAESTRGYTNK) form a disordered region.

Belongs to the G-protein coupled receptor 3 family.

The protein resides in the membrane. May be involved in early development in cAMP sensing and subsequent chemotactic response. Probable receptor of GABA and glutamate, leading respectively to the induction or inhibition of SDF-2 formation. In Dictyostelium discoideum (Social amoeba), this protein is Metabotropic glutamate receptor-like protein E (grlE).